The primary structure comprises 607 residues: ENTH domain-containing protein 1 (607 aa).

The ENTH domain maps to 9–141 (NFVKNYSDAE…MDEPLLCKER (133 aa)). Residues 543–574 (EAKNSISVLLREVKRAIARLHEDLSTVIQELN) are a coiled coil.

The chain is ENTH domain-containing protein 1 (ENTHD1) from Homo sapiens (Human).